We begin with the raw amino-acid sequence, 141 residues long: Large ribosomal subunit protein uL11 (141 aa).

It belongs to the universal ribosomal protein uL11 family. As to quaternary structure, part of the ribosomal stalk of the 50S ribosomal subunit. Interacts with L10 and the large rRNA to form the base of the stalk. L10 forms an elongated spine to which L12 dimers bind in a sequential fashion forming a multimeric L10(L12)X complex. Post-translationally, one or more lysine residues are methylated.

In terms of biological role, forms part of the ribosomal stalk which helps the ribosome interact with GTP-bound translation factors. In Gloeothece citriformis (strain PCC 7424) (Cyanothece sp. (strain PCC 7424)), this protein is Large ribosomal subunit protein uL11.